Here is a 317-residue protein sequence, read N- to C-terminus: Transaldolase (317 aa).

The active-site Schiff-base intermediate with substrate is K126.

Belongs to the transaldolase family. Type 1 subfamily. In terms of assembly, homodimer.

Its subcellular location is the cytoplasm. The enzyme catalyses D-sedoheptulose 7-phosphate + D-glyceraldehyde 3-phosphate = D-erythrose 4-phosphate + beta-D-fructose 6-phosphate. Its pathway is carbohydrate degradation; pentose phosphate pathway; D-glyceraldehyde 3-phosphate and beta-D-fructose 6-phosphate from D-ribose 5-phosphate and D-xylulose 5-phosphate (non-oxidative stage): step 2/3. Transaldolase is important for the balance of metabolites in the pentose-phosphate pathway. The protein is Transaldolase of Burkholderia pseudomallei (strain K96243).